Consider the following 225-residue polypeptide: Peptidyl-tRNA hydrolase (225 aa).

Position 14 (Tyr-14) interacts with tRNA. The Proton acceptor role is filled by His-19. Positions 64, 66, and 112 each coordinate tRNA. The segment at 187-225 (MQPPKPEKPKGEAKPAAPEAPEAAPDTRSALQRLADRFR) is disordered. Over residues 200–210 (KPAAPEAPEAA) the composition is skewed to low complexity.

It belongs to the PTH family. As to quaternary structure, monomer.

It is found in the cytoplasm. The enzyme catalyses an N-acyl-L-alpha-aminoacyl-tRNA + H2O = an N-acyl-L-amino acid + a tRNA + H(+). Functionally, hydrolyzes ribosome-free peptidyl-tRNAs (with 1 or more amino acids incorporated), which drop off the ribosome during protein synthesis, or as a result of ribosome stalling. In terms of biological role, catalyzes the release of premature peptidyl moieties from peptidyl-tRNA molecules trapped in stalled 50S ribosomal subunits, and thus maintains levels of free tRNAs and 50S ribosomes. The protein is Peptidyl-tRNA hydrolase of Cereibacter sphaeroides (strain ATCC 17025 / ATH 2.4.3) (Rhodobacter sphaeroides).